The primary structure comprises 374 residues: Aminomethyltransferase (374 aa).

It belongs to the GcvT family. In terms of assembly, the glycine cleavage system is composed of four proteins: P, T, L and H.

The enzyme catalyses N(6)-[(R)-S(8)-aminomethyldihydrolipoyl]-L-lysyl-[protein] + (6S)-5,6,7,8-tetrahydrofolate = N(6)-[(R)-dihydrolipoyl]-L-lysyl-[protein] + (6R)-5,10-methylene-5,6,7,8-tetrahydrofolate + NH4(+). The glycine cleavage system catalyzes the degradation of glycine. This is Aminomethyltransferase from Prochlorococcus marinus (strain MIT 9303).